We begin with the raw amino-acid sequence, 104 residues long: Small ribosomal subunit protein uS10 (104 aa).

It belongs to the universal ribosomal protein uS10 family. As to quaternary structure, part of the 30S ribosomal subunit.

Functionally, involved in the binding of tRNA to the ribosomes. The protein is Small ribosomal subunit protein uS10 of Xanthomonas oryzae pv. oryzae (strain MAFF 311018).